The chain runs to 499 residues: Protein phosphatase PP2A 55 kDa regulatory subunit (499 aa).

The interval 1-30 (MGRWGRQSPVLEPPDPQMQTTPPPPTLPPR) is disordered. Over residues 11–28 (LEPPDPQMQTTPPPPTLP) the composition is skewed to pro residues. 7 WD repeats span residues 79–118 (TDAD…KAAN), 144–185 (EIEE…KSFG), 228–266 (AHTY…QSYN), 277–317 (ELTE…LCDR), 336–374 (EIIS…KPIE), 391–432 (ENDC…DVTL), and 467–498 (DFNK…FQDK).

It belongs to the phosphatase 2A regulatory subunit B family. As to quaternary structure, PP2A exists in several trimeric forms, all of which consist of a core composed of a catalytic subunit associated with a 65 kDa regulatory subunit (PR65) (subunit A). The core complex associates with a third, variable subunit (subunit B), which confers distinct properties to the holoenzyme.

In terms of biological role, could perform a substrate recognition function or could be responsible for targeting the enzyme complex to the appropriate subcellular compartment. This is Protein phosphatase PP2A 55 kDa regulatory subunit (tws) from Drosophila melanogaster (Fruit fly).